We begin with the raw amino-acid sequence, 387 residues long: Phosphoglycerate kinase (387 aa).

Substrate-binding positions include 21-23 (DLN), Arg36, 59-62 (HLGR), Arg113, and Arg146. Residues Lys197, Glu314, and 340–343 (GGDT) each bind ATP.

It belongs to the phosphoglycerate kinase family. Monomer.

The protein resides in the cytoplasm. The enzyme catalyses (2R)-3-phosphoglycerate + ATP = (2R)-3-phospho-glyceroyl phosphate + ADP. Its pathway is carbohydrate degradation; glycolysis; pyruvate from D-glyceraldehyde 3-phosphate: step 2/5. In Aliivibrio fischeri (strain MJ11) (Vibrio fischeri), this protein is Phosphoglycerate kinase.